We begin with the raw amino-acid sequence, 330 residues long: uncharacterized protein (330 aa).

Helical transmembrane passes span 15-35 (LTLI…KGVL), 41-61 (FFVA…WAMG), 72-92 (GWGW…GFLA), 102-122 (LGSV…SWLF), 125-145 (VIGG…SLIG), 175-195 (LWML…PFVS), 201-221 (VVAT…IALV), 238-258 (LAYA…YLAS), 264-284 (SLSS…NLIL), and 286-306 (EQLS…IYLI). 2 EamA domains span residues 22–146 (FLWG…LIGL) and 182–308 (LSMA…LINQ).

This sequence belongs to the EamA transporter family.

Its subcellular location is the cell membrane. This is an uncharacterized protein from Synechocystis sp. (strain ATCC 27184 / PCC 6803 / Kazusa).